A 361-amino-acid chain; its full sequence is Palmitoyltransferase ZDHHC16 (361 aa).

The Cytoplasmic portion of the chain corresponds to Met1–Arg77. Residues Trp78 to Ala98 form a helical membrane-spanning segment. At Tyr99–Cys116 the chain is on the lumenal side. The helical transmembrane segment at Trp117–Ile137 threads the bilayer. Over Thr138–Arg198 the chain is Cytoplasmic. Residues Ser155–Phe205 form the DHHC domain. Cys185 functions as the S-palmitoyl cysteine intermediate in the catalytic mechanism. The chain crosses the membrane as a helical span at residues Tyr199–Trp219. Topologically, residues Asp220–Ser250 are lumenal. The chain crosses the membrane as a helical span at residues Leu251–Trp271. At His272–Val361 the chain is on the cytoplasmic side.

The protein belongs to the DHHC palmitoyltransferase family. In terms of assembly, interacts with ABL1. Interacts with COPS5. In terms of tissue distribution, ubiquitously expressed.

The protein localises to the endoplasmic reticulum membrane. It catalyses the reaction L-cysteinyl-[protein] + hexadecanoyl-CoA = S-hexadecanoyl-L-cysteinyl-[protein] + CoA. Its function is as follows. Palmitoyl acyltransferase that mediates palmitoylation of proteins such as PLN and ZDHHC6. Required during embryonic heart development and cardiac function, possibly by mediating palmitoylation of PLN, thereby affecting PLN phosphorylation and homooligomerization. Also required for eye development. Palmitoylates ZDHHC6, affecting the quaternary assembly of ZDHHC6, its localization, stability and function. May play a role in DNA damage response. May be involved in apoptosis regulation. Involved in the proliferation of neural stem cells by regulating the FGF/ERK pathway. The polypeptide is Palmitoyltransferase ZDHHC16 (Mus musculus (Mouse)).